Here is a 500-residue protein sequence, read N- to C-terminus: Probable betaine aldehyde dehydrogenase (500 aa).

249–254 (GSLATG) lines the NAD(+) pocket. The active-site Proton acceptor is the E271. Residue C305 is the Nucleophile of the active site.

Belongs to the aldehyde dehydrogenase family.

It carries out the reaction betaine aldehyde + NAD(+) + H2O = glycine betaine + NADH + 2 H(+). The protein operates within amine and polyamine biosynthesis; betaine biosynthesis via choline pathway; betaine from betaine aldehyde: step 1/1. This Schizosaccharomyces pombe (strain 972 / ATCC 24843) (Fission yeast) protein is Probable betaine aldehyde dehydrogenase (meu8).